The sequence spans 585 residues: Optineurin (585 aa).

Residues 1-32 (MSHQPLSCLTEKGDSSCETPGNGPSNMVHPNL) form a disordered region. The segment covering 16–25 (SCETPGNGPS) has biased composition (polar residues). A coiled-coil region spans residues 38-181 (EELLQQMKEL…VSELQLKLNS (144 aa)). The tract at residues 58–220 (MKLNNQAMKG…GPTRTDSISM (163 aa)) is interaction with Rab8. An LIR motif is present at residues 187–192 (DSFVEI). Serine 188 and serine 209 each carry phosphoserine. 2 disordered regions span residues 200-220 (EGAM…SISM) and 269-299 (FEKK…PESV). The stretch at 244–512 (CLREGNQKVE…LLKENNDFED (269 aa)) forms a coiled coil. Serine 346 carries the phosphoserine modification. The interaction with HD stretch occupies residues 415–585 (TKQQAEKVDK…LQIHVMDCII (171 aa)). The interval 416–525 (KQQAEKVDKV…RQSLMEMQCR (110 aa)) is interaction with MYO6. The UBAN motif lies at 478–483 (DFHAER). Serine 531 is modified (phosphoserine). A CCHC NOA-type zinc finger spans residues 555 to 585 (PRSIPIHSCPKCGEVLPDIDTLQIHVMDCII). Zn(2+) is bound by residues cysteine 563, cysteine 566, histidine 579, and cysteine 583.

In terms of assembly, self-associates. Interacts with HD. Interacts with GTF3A. Interacts with MYO6. Interacts (via UBAN) with ubiquitinated TFRC. Interacts with GTP-bound Rab8 (RAB8A and/or RAB8B). Interacts with TBC1D17. Interacts with TBK1. Interacts with TRAF3. Binds to linear ubiquitin chains. Interacts with LC3 family members MAP1LC3A, MAP1LC3B, GABARAP, GABARAPL1 and GABARAPL2; OPTN phosphorylation increases the association (at least with MAP1LC3B). Interacts with RAB12; the interaction may be indirect. Interacts with TBK1; this interaction leads to the Golgi localization of TBK1 and its subsequent activation. Interacts with palmitoyltransferase ZDHHC17/HIP14; the interaction does not lead to palmitoylation of OPTN. Interacts with CYLD. Interacts with TOM1; the interaction is indirect and is mediated by MYO6, which acts as a bridge between TOM1 and OPTN. Interacts with USP12; the interaction is independent of USP12 deubiquitinase activity and may be involved in regulation of autophagic flux. In terms of processing, phosphorylated by TBK1, leading to restrict bacterial proliferation in case of infection.

It is found in the cytoplasm. The protein localises to the perinuclear region. Its subcellular location is the golgi apparatus. The protein resides in the trans-Golgi network. It localises to the cytoplasmic vesicle. It is found in the autophagosome. The protein localises to the recycling endosome. In terms of biological role, plays an important role in the maintenance of the Golgi complex, in membrane trafficking, in exocytosis, through its interaction with myosin VI and Rab8. Links myosin VI to the Golgi complex and plays an important role in Golgi ribbon formation. Negatively regulates the induction of IFNB in response to RNA virus infection. Plays a neuroprotective role in the eye and optic nerve. Probably part of the TNF-alpha signaling pathway that can shift the equilibrium toward induction of cell death. May act by regulating membrane trafficking and cellular morphogenesis via a complex that contains Rab8 and huntingtin (HD). Mediates the interaction of Rab8 with the probable GTPase-activating protein TBC1D17 during Rab8-mediated endocytic trafficking, such as that of transferrin receptor (TFRC/TfR); regulates Rab8 recruitment to tubules emanating from the endocytic recycling compartment. Autophagy receptor that interacts directly with both the cargo to become degraded and an autophagy modifier of the MAP1 LC3 family; targets ubiquitin-coated bacteria (xenophagy) and appears to function in the same pathway as SQSTM1 and CALCOCO2/NDP52. This is Optineurin (Optn) from Rattus norvegicus (Rat).